The primary structure comprises 223 residues: Proteasome subunit beta type-1 (223 aa).

This sequence belongs to the peptidase T1B family. The 26S proteasome consists of a 20S proteasome core and two 19S regulatory subunits. The 20S proteasome core is composed of 28 subunits that are arranged in four stacked rings, resulting in a barrel-shaped structure. The two end rings are each formed by seven alpha subunits, and the two central rings are each formed by seven beta subunits. The catalytic chamber with the active sites is on the inside of the barrel.

The protein localises to the cytoplasm. It localises to the nucleus. In terms of biological role, non-catalytic component of the proteasome, a multicatalytic proteinase complex which is characterized by its ability to cleave peptides with Arg, Phe, Tyr, Leu, and Glu adjacent to the leaving group at neutral or slightly basic pH. The proteasome has an ATP-dependent proteolytic activity. This Petunia hybrida (Petunia) protein is Proteasome subunit beta type-1 (PBF1).